The sequence spans 127 residues: Aspartate 1-decarboxylase (127 aa).

S25 serves as the catalytic Schiff-base intermediate with substrate; via pyruvic acid. The residue at position 25 (S25) is a Pyruvic acid (Ser). T57 is a binding site for substrate. Y58 acts as the Proton donor in catalysis. A substrate-binding site is contributed by 73–75 (GAA).

It belongs to the PanD family. In terms of assembly, heterooctamer of four alpha and four beta subunits. It depends on pyruvate as a cofactor. Post-translationally, is synthesized initially as an inactive proenzyme, which is activated by self-cleavage at a specific serine bond to produce a beta-subunit with a hydroxyl group at its C-terminus and an alpha-subunit with a pyruvoyl group at its N-terminus.

The protein localises to the cytoplasm. It carries out the reaction L-aspartate + H(+) = beta-alanine + CO2. It participates in cofactor biosynthesis; (R)-pantothenate biosynthesis; beta-alanine from L-aspartate: step 1/1. Its function is as follows. Catalyzes the pyruvoyl-dependent decarboxylation of aspartate to produce beta-alanine. This Shouchella clausii (strain KSM-K16) (Alkalihalobacillus clausii) protein is Aspartate 1-decarboxylase.